A 336-amino-acid polypeptide reads, in one-letter code: Putative ALA-interacting subunit 4 (336 aa).

A helical membrane pass occupies residues V36 to F56. An N-linked (GlcNAc...) asparagine glycan is attached at N94. Residues R127 to K142 are compositionally biased toward basic and acidic residues. Residues R127–D148 are disordered. N167 carries an N-linked (GlcNAc...) asparagine glycan. The chain crosses the membrane as a helical span at residues F290–S310. N329 is a glycosylation site (N-linked (GlcNAc...) asparagine).

Belongs to the CDC50/LEM3 family. In terms of tissue distribution, expressed in flowers. May be restricted to pollen grains.

It is found in the membrane. The chain is Putative ALA-interacting subunit 4 (ALIS4) from Arabidopsis thaliana (Mouse-ear cress).